We begin with the raw amino-acid sequence, 155 residues long: UPF0260 protein Smed_0627 (155 aa).

This sequence belongs to the UPF0260 family.

This is UPF0260 protein Smed_0627 from Sinorhizobium medicae (strain WSM419) (Ensifer medicae).